We begin with the raw amino-acid sequence, 201 residues long: Glutathione peroxidase 1 (201 aa).

Residue S32 is modified to Phosphoserine. The active site involves U47. U47 is a non-standard amino acid (selenocysteine). N6-acetyllysine; alternate is present on residues K86, K112, and K146. K86, K112, and K146 each carry N6-succinyllysine; alternate. Phosphoserine is present on residues S195 and S199.

It belongs to the glutathione peroxidase family. In terms of assembly, homotetramer. Interacts with MIEN1. During periods of oxidative stress, Sec-47 may react with a superoxide radical, irreversibly lose hydroselenide and be converted to dehydroalanine.

The protein localises to the cytoplasm. It carries out the reaction 2 glutathione + H2O2 = glutathione disulfide + 2 H2O. The catalysed reaction is (12S)-hydroperoxy-(5Z,8Z,10E,14Z)-eicosatetraenoate + 2 glutathione = (12S)-hydroxy-(5Z,8Z,10E,14Z)-eicosatetraenoate + glutathione disulfide + H2O. In terms of biological role, protects the hemoglobin in erythrocytes from oxidative breakdown. In platelets, plays a crucial role of glutathione peroxidase in the arachidonic acid metabolism. This chain is Glutathione peroxidase 1 (GPX1), found in Hylobates lar (Lar gibbon).